The primary structure comprises 65 residues: Putative antitoxin PF2058 (65 aa).

It belongs to the UPF0165 family.

In terms of biological role, possibly the antitoxin component of a type II toxin-antitoxin (TA) system. In Pyrococcus furiosus (strain ATCC 43587 / DSM 3638 / JCM 8422 / Vc1), this protein is Putative antitoxin PF2058.